A 1083-amino-acid polypeptide reads, in one-letter code: Voltage-gated inwardly rectifying potassium channel KCNH3 (1083 aa).

Residues M1 to D228 are Cytoplasmic-facing. The PAS domain maps to I18–H90. Positions F93–W145 constitute a PAC domain. Residues K137–G150 show a composition bias toward basic and acidic residues. The disordered stretch occupies residues K137–R157. Residues G229–S249 traverse the membrane as a helical segment. At T250–G259 the chain is on the extracellular side. A helical membrane pass occupies residues P260–F280. The Cytoplasmic portion of the chain corresponds to R281–Y302. Residues V303–F323 traverse the membrane as a helical segment. The Extracellular segment spans residues K324–A331. A helical; Voltage-sensor membrane pass occupies residues H332–Y352. Residues S353–T361 lie on the Cytoplasmic side of the membrane. Residues L362–G382 form a helical membrane-spanning segment. The Extracellular portion of the chain corresponds to Q383–I453. 3 N-linked (GlcNAc...) asparagine glycosylation sites follow: N421, N428, and N436. Positions T454 to N474 form an intramembrane region, pore-forming. The short motif at S465–N470 is the Selectivity filter element. The Extracellular portion of the chain corresponds to T475–K479. Residues I480–V500 traverse the membrane as a helical segment. Residues T501–V1083 are Cytoplasmic-facing. Residue L582–R697 coordinates a nucleoside 3',5'-cyclic phosphate. Disordered stretches follow at residues E729–P810, C832–R873, and M972–W1055. Over residues T773–P785 the composition is skewed to basic residues. Positions G844–G861 are enriched in low complexity.

The protein belongs to the potassium channel family. H (Eag) (TC 1.A.1.20) subfamily. Kv12.2/KCNH3 sub-subfamily. In terms of assembly, the potassium channel is probably composed of a homo- or heterotetrameric complex of pore-forming alpha subunits that can associate with modulating beta subunits. Interacts with KCNE1 and KCNE3; these interactions regulate KCNH3 trafficking to the plasma membrane and its subsequent voltage-gated potassium channel activity. N-glycosylated. N-glycosylation mediates traffick to the cell membrane but is not necessary for voltage-gated potassium channel activity. In terms of tissue distribution, detected only in brain, in particular in the telencephalon. Detected in the cerebral cortex, occipital pole, frontal and temporal lobe, putamen, amygdala, hippocampus and caudate nucleus.

The protein localises to the cell membrane. It catalyses the reaction K(+)(in) = K(+)(out). Pore-forming (alpha) subunit of a voltage-gated inwardly rectifying potassium channel. Charactherized by a fast rate of activation during depolarization followed by a rapid inactivation at much more depolarized value causing inward rectification due to a C-type inactivation mechanism. Exhibits a rapid recovery from inactivation. This is Voltage-gated inwardly rectifying potassium channel KCNH3 from Homo sapiens (Human).